Consider the following 353-residue polypeptide: E3 ubiquitin-protein ligase Os03g0188200 (353 aa).

The chain crosses the membrane as a helical span at residues 48-68 (VVVLVALITAFVLLTVFSVLI). The RING-type; atypical zinc finger occupies 133–175 (CAVCLAEFADSDELRVLPACCHVFHPDCIDPWLAAAVTCPLCR). 2 stretches are compositionally biased toward basic and acidic residues: residues 308 to 318 (ADWDAGEEHGG) and 340 to 353 (GSKE…LNRV). The disordered stretch occupies residues 308–353 (ADWDAGEEHGGSKRVHPVAGAQDETPSGSGSDGSKENSDSDALNRV).

The protein localises to the membrane. It carries out the reaction S-ubiquitinyl-[E2 ubiquitin-conjugating enzyme]-L-cysteine + [acceptor protein]-L-lysine = [E2 ubiquitin-conjugating enzyme]-L-cysteine + N(6)-ubiquitinyl-[acceptor protein]-L-lysine.. It functions in the pathway protein modification; protein ubiquitination. Its function is as follows. Possesses E3 ubiquitin-protein ligase in vitro. This chain is E3 ubiquitin-protein ligase Os03g0188200, found in Oryza sativa subsp. japonica (Rice).